We begin with the raw amino-acid sequence, 759 residues long: ARF GTPase-activating protein GIT2 (759 aa).

In terms of domain architecture, Arf-GAP spans 1–124 (MSKRLRSNDV…AFVHRLPCRD (124 aa)). A C4-type zinc finger spans residues 11 to 34 (CADCSGPDPSWASVNRGTLICDEC). 3 ANK repeats span residues 132–161 (DLSK…QANF), 166–198 (KGST…THDS), and 199–228 (SGKT…ELTD). 2 disordered regions span residues 376-422 (VSNQ…DLSD) and 469-641 (QSEN…PSTE). Residues 385 to 402 (QDNDQPDYDSVASDEDTD) are compositionally biased toward acidic residues. The stretch at 451-478 (NNNLSGELRIMQKKLQTLQSENSSLRRQ) forms a coiled coil. Over residues 469-489 (QSENSSLRRQATASACQVQTA) the composition is skewed to polar residues. A compositionally biased stretch (low complexity) spans 555–569 (TSSSSLPSFPSTLSW). Residues 570–583 (SRDESTRRASRLEK) are compositionally biased toward basic and acidic residues.

In terms of assembly, may form heterooligomers with GIT1. Directly interacts with protein Piccolo/PCLO. Interacts with PPFIA1 and PPFIA2. Interacts with ARHGEF7. Identified in a complex with ARHGEF6 and BIN2. Interacts with PAK3. Interacts with PXN/paxillin. Interacts with TGFB1I1. Forms a complex with EFNB1 and GRB4/NCK2.

In terms of biological role, GTPase-activating protein for ADP ribosylation factor family members, including ARF1. The sequence is that of ARF GTPase-activating protein GIT2 (Git2) from Rattus norvegicus (Rat).